We begin with the raw amino-acid sequence, 307 residues long: Glutathione synthetase (307 aa).

The ATP-grasp domain maps to 120-304 (KLGALRYSHL…VSDKVIEKLL (185 aa)). 146 to 202 (AQINHDVVVKPLGGKGGQGVIRLTKDSPGIKAMIELITSQEQLPVMMQKFIPEVKEG) lines the ATP pocket. The Mg(2+) site is built by Glu-275 and Asn-277.

It belongs to the prokaryotic GSH synthase family. Mg(2+) is required as a cofactor. The cofactor is Mn(2+).

The enzyme catalyses gamma-L-glutamyl-L-cysteine + glycine + ATP = glutathione + ADP + phosphate + H(+). It functions in the pathway sulfur metabolism; glutathione biosynthesis; glutathione from L-cysteine and L-glutamate: step 2/2. This Prochlorococcus marinus subsp. pastoris (strain CCMP1986 / NIES-2087 / MED4) protein is Glutathione synthetase.